Consider the following 364-residue polypeptide: S-adenosylmethionine:tRNA ribosyltransferase-isomerase (364 aa).

It belongs to the QueA family. As to quaternary structure, monomer.

Its subcellular location is the cytoplasm. It carries out the reaction 7-aminomethyl-7-carbaguanosine(34) in tRNA + S-adenosyl-L-methionine = epoxyqueuosine(34) in tRNA + adenine + L-methionine + 2 H(+). It functions in the pathway tRNA modification; tRNA-queuosine biosynthesis. Transfers and isomerizes the ribose moiety from AdoMet to the 7-aminomethyl group of 7-deazaguanine (preQ1-tRNA) to give epoxyqueuosine (oQ-tRNA). The sequence is that of S-adenosylmethionine:tRNA ribosyltransferase-isomerase from Synechococcus sp. (strain CC9902).